The sequence spans 184 residues: (2E)-enoyl-[ACP] glycyltransferase (184 aa).

This sequence belongs to the FcoT family.

It carries out the reaction a (3R)-3-[(carboxymethyl)amino]fatty acid + holo-[ACP] + H(+) = a (2E)-enoyl-[ACP] + glycine + H2O. The catalysed reaction is (3R)-3-[(carboxylmethyl)amino]decanoate + holo-[ACP] + H(+) = (2E)-decenoyl-[ACP] + glycine + H2O. Involved in the biosynthesis of a unique class of isonitrile lipopeptides (INLPs) that seem to play a role in metal acquisition in M.marinum. Catalyzes a Michael addition of glycine to the beta-position of an alpha,beta-unsaturated fatty acyl-[ACP], producing a (3R)-3-[(carboxymethyl)amino]fatty acid. Acts on the (2E)-decenoyl moiety loaded on the acyl-carrier protein MmaB, forming the product (3R)-3-[(carboxymethyl)amino]decanoate released from MmaB. In Mycobacterium marinum (strain ATCC BAA-535 / M), this protein is (2E)-enoyl-[ACP] glycyltransferase.